We begin with the raw amino-acid sequence, 442 residues long: 26S proteasome non-ATPase regulatory subunit 12 homolog B (442 aa).

Residues Met1–Ala129 are a coiled coil. Residues Glu232–Asp403 enclose the PCI domain.

The protein belongs to the proteasome subunit p55 family. In terms of assembly, component of the 19S regulatory particle (RP/PA700) lid subcomplex of the 26S proteasome. The 26S proteasome is composed of a core protease (CP), known as the 20S proteasome, capped at one or both ends by the 19S regulatory particle (RP/PA700). The RP/PA700 complex is composed of at least 17 different subunits in two subcomplexes, the base and the lid, which form the portions proximal and distal to the 20S proteolytic core, respectively. As to expression, ubiquitous with highest expression in flowers.

Its subcellular location is the cytoplasm. It is found in the nucleus. Acts as a regulatory subunit of the 26 proteasome which is involved in the ATP-dependent degradation of ubiquitinated proteins. Acts redundantly with RPN5A. This chain is 26S proteasome non-ATPase regulatory subunit 12 homolog B (RPN5B), found in Arabidopsis thaliana (Mouse-ear cress).